Consider the following 177-residue polypeptide: MSRIGKHPVPVPAGVTVTVAGQNLTAKGKLGQLSLSLIDDIAVSMEDGKVVVQPRTETKRARQNWATARTLVFNLVKGVNDGFTKNLEINGVGYKAAVQGKDLVLNLGYSHEIRYPIPEGITIKCDKPTSVSVSGTDKQQVGQVAAEIRAFRGPEPYKGKGVKYENEVIIRKEGKKK.

Belongs to the universal ribosomal protein uL6 family. In terms of assembly, part of the 50S ribosomal subunit.

Its function is as follows. This protein binds to the 23S rRNA, and is important in its secondary structure. It is located near the subunit interface in the base of the L7/L12 stalk, and near the tRNA binding site of the peptidyltransferase center. This chain is Large ribosomal subunit protein uL6, found in Rhodospirillum centenum (strain ATCC 51521 / SW).